The chain runs to 270 residues: MRTAFYISDGTAITAEVFGHALLSLFPVSFNHNTIPFVETEEQAHKVLQQISESFQDTGERPLVFYTIVNVDVRKIISKSVGINYNFLDQFVAPLEKVLGVPSKPEKHRTHSIHETTYDIRIEAVNYALANDDGSNLKDYDEADIILTGVSRSGKTPTSLYLALQYGIKAANYPFTEEDMGDMLKLPPTLRRYKHKLFGLTIAADRLHQIRSERRANSKYASIQQCRMELREVENLYRKEKIPFLNSTKYSIEEISAKILAETGLKRRKY.

149-156 contributes to the ADP binding site; sequence GVSRSGKT.

This sequence belongs to the pyruvate, phosphate/water dikinase regulatory protein family. PSRP subfamily.

It carries out the reaction [pyruvate, water dikinase] + ADP = [pyruvate, water dikinase]-phosphate + AMP + H(+). The enzyme catalyses [pyruvate, water dikinase]-phosphate + phosphate + H(+) = [pyruvate, water dikinase] + diphosphate. Functionally, bifunctional serine/threonine kinase and phosphorylase involved in the regulation of the phosphoenolpyruvate synthase (PEPS) by catalyzing its phosphorylation/dephosphorylation. This chain is Putative phosphoenolpyruvate synthase regulatory protein, found in Alteromonas mediterranea (strain DSM 17117 / CIP 110805 / LMG 28347 / Deep ecotype).